A 165-amino-acid polypeptide reads, in one-letter code: Ribosome maturation factor RimM (165 aa).

A PRC barrel domain is found at 94 to 165 (EDEFYIADLN…YVILNYQTKV (72 aa)).

The protein belongs to the RimM family. As to quaternary structure, binds ribosomal protein uS19.

It is found in the cytoplasm. Its function is as follows. An accessory protein needed during the final step in the assembly of 30S ribosomal subunit, possibly for assembly of the head region. Essential for efficient processing of 16S rRNA. May be needed both before and after RbfA during the maturation of 16S rRNA. It has affinity for free ribosomal 30S subunits but not for 70S ribosomes. The polypeptide is Ribosome maturation factor RimM (Rickettsia prowazekii (strain Madrid E)).